Here is a 238-residue protein sequence, read N- to C-terminus: Transcription factor PCL1 (238 aa).

Residues 71–90 show a composition bias toward low complexity; it reads RLRRASSSSSSSFPAFASKG. The segment at 71–119 is disordered; sequence RLRRASSSSSSSFPAFASKGAGTGADEAESGGGADGGNGNTNNSSSKRA. A compositionally biased stretch (gly residues) spans 100-109; sequence SGGGADGGNG. A DNA-binding region (myb-like GARP) is located at residues 115–174; that stretch reads SSKRARLVWTPQLHKRFVEVVAHLGMKNAVPKTIMQLMNVEGLTRENVASHLQKYRLYVK.

The protein resides in the nucleus. Its function is as follows. Transcription factor that is essential for the generation of the circadian clock oscillation. Binds to specific sites on CCA1 promoter leading to CCA1 activation. The protein is Transcription factor PCL1 (PCL1) of Oryza sativa subsp. japonica (Rice).